The primary structure comprises 173 residues: Glutamyl-tRNA(Gln) amidotransferase subunit C, mitochondrial (173 aa).

It belongs to the GatC family. Subunit of the heterotrimeric GatCAB amidotransferase (AdT) complex, composed of A, B and C subunits.

Its subcellular location is the mitochondrion. It catalyses the reaction L-glutamyl-tRNA(Gln) + L-glutamine + ATP + H2O = L-glutaminyl-tRNA(Gln) + L-glutamate + ADP + phosphate + H(+). Allows the formation of correctly charged Gln-tRNA(Gln) through the transamidation of misacylated Glu-tRNA(Gln) in the mitochondria. The reaction takes place in the presence of glutamine and ATP through an activated gamma-phospho-Glu-tRNA(Gln). The chain is Glutamyl-tRNA(Gln) amidotransferase subunit C, mitochondrial from Drosophila persimilis (Fruit fly).